Reading from the N-terminus, the 45-residue chain is Large ribosomal subunit protein bL34 (45 aa).

The protein belongs to the bacterial ribosomal protein bL34 family.

In Streptomyces coelicolor (strain ATCC BAA-471 / A3(2) / M145), this protein is Large ribosomal subunit protein bL34 (rpmH).